The following is a 330-amino-acid chain: uncharacterized protein (330 aa).

10 helical membrane-spanning segments follow: residues 27–47, 56–76, 90–110, 119–139, 147–167, 176–196, 206–226, 243–263, 270–290, and 294–314; these read MGAYVSLAAAMAIVGSSVVVG, VFLSSGLRFLIASVVLLMLLF, VFVLLVQSFTGVFLFSICLLY, ESGILTSTTPMLIGILSFFLL, TLIGILLAVCGVMAINLFGAG, LFGNMLIIAAVIGEALFTLMA, LAISTFVSLFGFLFFLPFALF, YVLYYALFVTVLAFYLWYSGV, VSGIFTSVLPVSAVILSGVIL, and FEFVHFIGIACVIGGIFVTVI. 2 EamA domains span residues 38 to 163 and 187 to 314; these read AIVG…AINL and IGEA…VTVI.

It belongs to the EamA transporter family.

Its subcellular location is the cell membrane. This is an uncharacterized protein from Bacillus subtilis (strain 168).